Consider the following 926-residue polypeptide: Peripheral plasma membrane protein CASK (926 aa).

The Protein kinase domain occupies 12 to 276 (YELCEVIGKG…VYEALNHPWL (265 aa)). Residues 18 to 26 (IGKGPFSVV) and Lys41 contribute to the ATP site. Ser51 carries the phosphoserine modification. The active site involves Asp141. Residues Ser151 and Ser155 each carry the phosphoserine; by autocatalysis modification. Thr182 carries the phosphothreonine modification. Lys192 and Ser313 each carry phosphoserine. The calmodulin-binding stretch occupies residues 305–315 (KGAVLAAVSSH). L27 domains follow at residues 343–398 (AERA…SPQI) and 402–455 (PSDA…YSDE). Residues 482–909 (MENVTRVRLV…DETIRHLEEA (428 aa)) form a required for interaction with NRXN1 (via C-terminal tail) region. Residues 489–564 (RLVQFQKNTD…MLREMRGSIT (76 aa)) form the PDZ domain. A phosphoserine mark is found at Tyr571 and Ser577. Residues 574-610 (QSSSCERDSPSTSRQSPANGHSSTNNSVSDLPSTTQP) form a disordered region. The 71-residue stretch at 612-682 (GRQIYVRAQF…PSPELQEWRV (71 aa)) folds into the SH3 domain. The region spanning 739-911 (RKTLVLLGAH…TIRHLEEAVE (173 aa)) is the Guanylate kinase-like domain.

The protein in the N-terminal section; belongs to the protein kinase superfamily. CAMK Ser/Thr protein kinase family. CaMK subfamily. It belongs to the MAGUK family. As to quaternary structure, CASK and LIN7 form two mutually exclusive tripartite complexes with APBA1 or CASKIN1. Component of the brain-specific heterotrimeric complex (LIN-10-LIN-2-LIN-7 complex) composed of at least APBA1, CASK, and LIN7, which associates with the motor protein KIF17 to transport vesicles along microtubules. Forms a heterotrimeric complex with DLG1 and LIN7B via their L27 domains. Identified in a complex with ACTN4, IQGAP1, MAGI2, NPHS1, SPTAN1 and SPTBN1. Part of a complex containing CASK, TBR1 and TSPYL2. Interacts with WHRN. Interacts (via the PDZ, SH3 and guanylate kinase-like domains) with NRXN1 (via C-terminus). Interacts with CASKIN1, APBA1, LIN7(A/B/C) and L27 domain of DLG1 and isoform 2 of DLG4. Interacts with FCHSD2. Interacts with KIRREL3. Interacts with TBR1. Interacts with TSPYL2. The cofactor is Unlike other protein kinases, does not require a divalent cation such as magnesium for catalytic activity.. As to expression, ubiquitous. Expression is significantly greater in brain relative to kidney, lung, and liver and in fetal brain and kidney relative to lung and liver.

It localises to the nucleus. The protein localises to the cytoplasm. It is found in the cell membrane. It catalyses the reaction L-seryl-[protein] + ATP = O-phospho-L-seryl-[protein] + ADP + H(+). It carries out the reaction L-threonyl-[protein] + ATP = O-phospho-L-threonyl-[protein] + ADP + H(+). Differs from archetypal CaMK members in that the kinase domain exhibits a constitutively active conformation and the autoinhibitory region does not engage in direct contact with the ATP-binding cleft, although it still binds Ca(2+)/CAM. In terms of biological role, multidomain scaffolding Mg(2+)-independent protein kinase that catalyzes the phosphotransfer from ATP to proteins such as NRXN1, and plays a role in synaptic transmembrane protein anchoring and ion channel trafficking. Contributes to neural development and regulation of gene expression via interaction with the transcription factor TBR1. Binds to cell-surface proteins, including amyloid precursor protein, neurexins and syndecans. May mediate a link between the extracellular matrix and the actin cytoskeleton via its interaction with syndecan and with the actin/spectrin-binding protein 4.1. Component of the LIN-10-LIN-2-LIN-7 complex, which associates with the motor protein KIF17 to transport vesicles containing N-methyl-D-aspartate (NMDA) receptor subunit NR2B along microtubules. This Homo sapiens (Human) protein is Peripheral plasma membrane protein CASK.